Here is a 456-residue protein sequence, read N- to C-terminus: Senecionine N-oxygenase (456 aa).

The first 22 residues, 1–22 (MFRKFVIMLVLSLLVAAGISQA), serve as a signal peptide directing secretion. 32–37 (GAGYSG) is a binding site for FAD. 215-220 (GAGPSG) is an NADP(+) binding site.

It belongs to the FMO family. As to quaternary structure, homotetramer. Requires FAD as cofactor. In terms of tissue distribution, hemolymph.

It localises to the secreted. The catalysed reaction is senecionine + NADPH + O2 = senecionine N-oxide + NADP(+) + H2O. In terms of biological role, NADPH-dependent monooxygenase that detoxifies senecionine and similar plant alkaloids that are ingested by the larvae. Is active towards a narrow range of related substrates with highest activity towards senecionine, followed by seneciphylline, retrorsine, monocrotaline, senecivernine, axillarine and axillaridine. In Tyria jacobaeae (Cinnabar moth), this protein is Senecionine N-oxygenase (sno1).